Reading from the N-terminus, the 427-residue chain is MSVSFENKETNRGVLTFTISQDQIKPELDRVFKSVKKSLNVPGFRKGHLPRPIFDKKFGEESLYQDVMNALLPNAYEAAVKEAGLEVVAQPKIDVTSMEKGQDWVIAAEVVTKPEVKLGDYKNLEVSVDVEKEVTDADVEERIERERNNLAELVIKEAAAENGDTVVIDFVGSIDGVEFDGGKGENFSLGLGSGQFIPGFEDQLVGHSAGETVDVIVTFPEDYQAEDLAGKEAKFVTTIHEVKAKEVPALDDELAKDIDEEVETLADLKEKYRKELAAAKEEAYKDAVEGAAIDTAVENAEIVELPEEMIHEEVHRSVNEFLGNLQRQGINPDMYFQITGTTQEDLHNQYQAEAESRTKTNLVIEAVAKAEGFDASEEEIQKEVEQLAADYNMEVAQVQSLLSADMLKHDITIKKAVELITSTATVK.

Positions 163-248 (GDTVVIDFVG…IHEVKAKEVP (86 aa)) constitute a PPIase FKBP-type domain.

It belongs to the FKBP-type PPIase family. Tig subfamily.

It localises to the cytoplasm. The enzyme catalyses [protein]-peptidylproline (omega=180) = [protein]-peptidylproline (omega=0). In terms of biological role, involved in protein export. Acts as a chaperone by maintaining the newly synthesized protein in an open conformation. Functions as a peptidyl-prolyl cis-trans isomerase. The polypeptide is Trigger factor (Streptococcus pneumoniae (strain ATCC 700669 / Spain 23F-1)).